The primary structure comprises 344 residues: Uroporphyrinogen decarboxylase (344 aa).

Substrate-binding positions include 26–30, Phe-45, Asp-75, Tyr-151, Ser-206, and His-320; that span reads RQAGR.

The protein belongs to the uroporphyrinogen decarboxylase family. As to quaternary structure, homodimer.

It is found in the cytoplasm. The catalysed reaction is uroporphyrinogen III + 4 H(+) = coproporphyrinogen III + 4 CO2. It participates in porphyrin-containing compound metabolism; protoporphyrin-IX biosynthesis; coproporphyrinogen-III from 5-aminolevulinate: step 4/4. Its function is as follows. Catalyzes the decarboxylation of four acetate groups of uroporphyrinogen-III to yield coproporphyrinogen-III. This Staphylococcus haemolyticus (strain JCSC1435) protein is Uroporphyrinogen decarboxylase.